The sequence spans 402 residues: Speedy protein E5 (402 aa).

Residues M1–E89 form a disordered region. The segment covering E16–Y39 has biased composition (polar residues). The span at D76–E89 shows a compositional bias: acidic residues.

The protein belongs to the Speedy/Ringo family.

The protein is Speedy protein E5 (SPDYE5) of Homo sapiens (Human).